Reading from the N-terminus, the 312-residue chain is Protoheme IX farnesyltransferase (312 aa).

Topologically, residues 1-36 are cytoplasmic; sequence MNKSNTAIDPTNVIEAGPDSSVADVQQKSWKDYLVL. A helical transmembrane segment spans residues 37 to 55; it reads AKQGIVTSNLITTFAGIYL. Residues 56-69 lie on the Extracellular side of the membrane; it reads AIVYTGTVFTMHLD. The helical transmembrane segment at 70–88 threads the bilayer; that stretch reads TMIFALLGAALVMAGGCTL. Residues 89-110 are Cytoplasmic-facing; the sequence is NNYIDRDIDHLMERTKERPTVT. The chain crosses the membrane as a helical span at residues 111–129; the sequence is GRFSAKHVLLVGLAQAALG. Topologically, residues 130-138 are extracellular; sequence IIFLALTTP. A helical membrane pass occupies residues 139 to 157; sequence TAAVIGLIGLFIYVVLYTM. Topologically, residues 158–228 are cytoplasmic; sequence WTKRTTTLNT…YRAAGIPMLP (71 aa). The chain crosses the membrane as a helical span at residues 229–247; it reads VVAGFEMTKRQMVVYVAAL. Topologically, residues 248 to 259 are extracellular; it reads LPVSLMLYPFGL. The chain crosses the membrane as a helical span at residues 260 to 275; sequence VYTIVAAVLGVGWLAL. The Cytoplasmic portion of the chain corresponds to 276 to 296; it reads GIAGFKMKDDIKWARLMFVYS. The helical transmembrane segment at 297-307 threads the bilayer; it reads LNYLTILFVLM. Topologically, residues 308–312 are extracellular; it reads VIVHF.

The protein belongs to the UbiA prenyltransferase family.

It is found in the cell membrane. It catalyses the reaction heme b + (2E,6E)-farnesyl diphosphate + H2O = Fe(II)-heme o + diphosphate. The protein operates within porphyrin-containing compound metabolism; heme O biosynthesis; heme O from protoheme: step 1/1. Converts protoheme IX and farnesyl diphosphate to heme O. This is Protoheme IX farnesyltransferase (ctaB) from Alkalihalophilus pseudofirmus (strain ATCC BAA-2126 / JCM 17055 / OF4) (Bacillus pseudofirmus).